The chain runs to 277 residues: NH(3)-dependent NAD(+) synthetase (277 aa).

36 to 43 (GLSGGIDS) is an ATP binding site. Asp42 contacts Mg(2+). Arg118 is a deamido-NAD(+) binding site. Thr138 is a binding site for ATP. Residue Glu143 participates in Mg(2+) binding. The ATP site is built by Lys167 and Ser189.

Belongs to the NAD synthetase family. As to quaternary structure, homodimer.

It carries out the reaction deamido-NAD(+) + NH4(+) + ATP = AMP + diphosphate + NAD(+) + H(+). Its pathway is cofactor biosynthesis; NAD(+) biosynthesis; NAD(+) from deamido-NAD(+) (ammonia route): step 1/1. Catalyzes the ATP-dependent amidation of deamido-NAD to form NAD. Uses ammonia as a nitrogen source. This Chlorobium phaeobacteroides (strain DSM 266 / SMG 266 / 2430) protein is NH(3)-dependent NAD(+) synthetase.